Here is a 756-residue protein sequence, read N- to C-terminus: 5-methyltetrahydropteroyltriglutamate--homocysteine methyltransferase (756 aa).

5-methyltetrahydropteroyltri-L-glutamate contacts are provided by residues 15-18 and Lys-111; that span reads REWK. The tract at residues 392–411 is disordered; the sequence is GAATSHNLENKKRPQSFNER. Residues 399-411 are compositionally biased toward basic and acidic residues; the sequence is LENKKRPQSFNER. Residues 429–431 and Glu-482 contribute to the L-homocysteine site; that span reads IGS. L-methionine contacts are provided by residues 429 to 431 and Glu-482; that span reads IGS. 5-methyltetrahydropteroyltri-L-glutamate is bound by residues 513-514 and Trp-559; that span reads RC. Asp-597 contacts L-homocysteine. Asp-597 lines the L-methionine pocket. Position 603 (Glu-603) interacts with 5-methyltetrahydropteroyltri-L-glutamate. Zn(2+)-binding residues include His-639, Cys-641, and Glu-663. His-692 serves as the catalytic Proton donor. Cys-724 is a Zn(2+) binding site.

This sequence belongs to the vitamin-B12 independent methionine synthase family. Requires Zn(2+) as cofactor.

It catalyses the reaction 5-methyltetrahydropteroyltri-L-glutamate + L-homocysteine = tetrahydropteroyltri-L-glutamate + L-methionine. It functions in the pathway amino-acid biosynthesis; L-methionine biosynthesis via de novo pathway; L-methionine from L-homocysteine (MetE route): step 1/1. Its function is as follows. Catalyzes the transfer of a methyl group from 5-methyltetrahydrofolate to homocysteine resulting in methionine formation. The protein is 5-methyltetrahydropteroyltriglutamate--homocysteine methyltransferase of Halalkalibacterium halodurans (strain ATCC BAA-125 / DSM 18197 / FERM 7344 / JCM 9153 / C-125) (Bacillus halodurans).